We begin with the raw amino-acid sequence, 553 residues long: Probable cytochrome P450 301a1, mitochondrial (553 aa).

C502 lines the heme pocket.

The protein belongs to the cytochrome P450 family. The cofactor is heme.

It localises to the mitochondrion membrane. In Drosophila melanogaster (Fruit fly), this protein is Probable cytochrome P450 301a1, mitochondrial (Cyp301a1).